Consider the following 144-residue polypeptide: Superoxide dismutase [Mn], mitochondrial (144 aa).

Mn(2+)-binding residues include His10, His58, and Asp143.

It belongs to the iron/manganese superoxide dismutase family. As to quaternary structure, homotetramer. Requires Mn(2+) as cofactor.

It localises to the mitochondrion matrix. The catalysed reaction is 2 superoxide + 2 H(+) = H2O2 + O2. In terms of biological role, destroys superoxide anion radicals which are normally produced within the cells and which are toxic to biological systems. This is Superoxide dismutase [Mn], mitochondrial from Petromyzon marinus (Sea lamprey).